The chain runs to 90 residues: Phenol 2-monooxygenase, stimulatory component DmpM (90 aa).

Belongs to the TmoD/XamoD family. Active as a monomer. Formation of dimers inactivates the protein. The multicomponent enzyme phenol hydroxylase is formed by DmpL (P1 component), DmpM (P2 component), DmpN (P3 component), DmpO (P4 component) and DmpP (P5 component).

It catalyses the reaction phenol + NADH + O2 + H(+) = catechol + NAD(+) + H2O. The protein operates within aromatic compound metabolism; phenol degradation. Functionally, part of a multicomponent enzyme which catalyzes the degradation of phenol and some of its methylated derivatives. DmpM is a regulatory subunit that stimulates the phenol hydroxylase activity of the complex. The steady-state rate of phenol hydroxylase turnover is dependent on the DmpM concentration, with a maximum observed rate at about 1.5 DmpM per oxygenase monomer. Higher concentrations of DmpM inhibit phenol hydroxylase activity. May act by altering the redox potential of the oxygenase. Required for growth on phenol and for in vitro phenol hydroxylase activity. The sequence is that of Phenol 2-monooxygenase, stimulatory component DmpM from Pseudomonas sp. (strain CF600).